The chain runs to 180 residues: D-lyxose ketol-isomerase (180 aa).

Lysine 62 is a D-fructose binding site. Mn(2+)-binding residues include histidine 75 and histidine 77. D-fructose is bound at residue lysine 86. Residues glutamate 88 and histidine 143 each contribute to the Mn(2+) site. D-fructose-binding residues include glutamate 156, aspartate 166, and arginine 175.

Belongs to the D-lyxose ketol-isomerase family. Homodimer; disulfide-linked. Stabilized by a disulfide bond between the two monomers of the dimeric enzyme and increased hydrophobicity at the dimer interface. Requires Mn(2+) as cofactor.

It carries out the reaction D-lyxose = D-xylulose. Its function is as follows. Sugar isomerase that catalyzes the reversible isomerization of D-lyxose to D-xylulose. Is highly specific for the substrate D-lyxose, showing less than 2% activity towards mannose and other substrates reported for lyxose isomerases. The polypeptide is D-lyxose ketol-isomerase (Thermofilum sp. (strain ex4484_79)).